We begin with the raw amino-acid sequence, 205 residues long: Large ribosomal subunit protein uL4 (205 aa).

Residues 44–79 are disordered; that stretch reads RAGTKAQKTRREVSGGGAKPWRQKGTGRARAGSSRS.

Belongs to the universal ribosomal protein uL4 family. As to quaternary structure, part of the 50S ribosomal subunit.

One of the primary rRNA binding proteins, this protein initially binds near the 5'-end of the 23S rRNA. It is important during the early stages of 50S assembly. It makes multiple contacts with different domains of the 23S rRNA in the assembled 50S subunit and ribosome. Its function is as follows. Forms part of the polypeptide exit tunnel. The sequence is that of Large ribosomal subunit protein uL4 from Coxiella burnetii (strain RSA 331 / Henzerling II).